We begin with the raw amino-acid sequence, 369 residues long: Terpene cyclase DEP1 (369 aa).

Transmembrane regions (helical) follow at residues 9–29 (FFYL…FNGM), 82–102 (LLFF…LIES), 118–138 (AMVL…LYLV), 157–177 (ALLV…VPAW), 190–210 (IALF…LASI), 234–254 (LVLA…GALI), 298–318 (LFSQ…SHLL), and 342–362 (LVYL…SFAL).

It belongs to the membrane-bound ascI terpene cyclase family.

The protein localises to the membrane. Its pathway is polyketide biosynthesis. Part of the gene cluster that mediates the biosynthesis of depudecin, a highly oxidized eleven-carbon linear polyketide that acts as a histone deacetylase (HDAC) inhibitor and makes a small contribution to pathogenesis. The reducing polyketide synthase DEP5 is the central enzyme in depudecin biosynthesis by yielding the backbone polyketide chain. The monooxygenases DEP2 and DEP4, as well as the uncharacterized protein DEP1, then act as tailoring enzymes to modify the intermediate polyketide chain into depudecin. This Alternaria brassicicola (Dark leaf spot agent) protein is Terpene cyclase DEP1.